The following is a 515-amino-acid chain: MTKRALISVSDKNGIVEFAQELTKFGWEIISTGGTKVALDQAGVTTIAIDDVTGFPEMMDGRVKTLHPKIHGGLLARRDLDSHLQAANDHEIGLIDLVVVNLYPFKETILRPDVTYDLAVENIDIGGPSMLRSAAKNHASVTVVVDPADYPTVLGEIAEQGETSYATRQRLAAKVFRHTAAYDALIADYFTKQVGEDKPEKLTITYDLNQPMRYGENPQQNADFYQNALPTAYSIAAAKQLNGKELSFNNIRDADAAIRIIRDFKDRPTVVALKHMNPCGIGQAETIEQAWDYAYEADPVSIFGGIVVLNREVDAATAEKMHPIFLEIIIAPGYSAEALAILTNKKKNLRILELAFDAQDASEVEKEFTGVVGGLLVQDQDVVVESPVDWQVVTERQPSEQEWAAMEFAWKSSKYVKSNGIIITNDKMTLGVGPGQTNRVASVRIAIEQAKDRLEGAVLASDAFFPFADNVEEIAAAGIKAIIQPGGSVRDQDSIDMANKYGLTMVFTGVRHFRH.

One can recognise an MGS-like domain in the interval 1-145 (MTKRALISVS…KNHASVTVVV (145 aa)).

It belongs to the PurH family.

The catalysed reaction is (6R)-10-formyltetrahydrofolate + 5-amino-1-(5-phospho-beta-D-ribosyl)imidazole-4-carboxamide = 5-formamido-1-(5-phospho-D-ribosyl)imidazole-4-carboxamide + (6S)-5,6,7,8-tetrahydrofolate. The enzyme catalyses IMP + H2O = 5-formamido-1-(5-phospho-D-ribosyl)imidazole-4-carboxamide. The protein operates within purine metabolism; IMP biosynthesis via de novo pathway; 5-formamido-1-(5-phospho-D-ribosyl)imidazole-4-carboxamide from 5-amino-1-(5-phospho-D-ribosyl)imidazole-4-carboxamide (10-formyl THF route): step 1/1. Its pathway is purine metabolism; IMP biosynthesis via de novo pathway; IMP from 5-formamido-1-(5-phospho-D-ribosyl)imidazole-4-carboxamide: step 1/1. This Streptococcus suis protein is Bifunctional purine biosynthesis protein PurH.